A 536-amino-acid polypeptide reads, in one-letter code: Ecdysone receptor (536 aa).

The modulating stretch occupies residues 1–114; that stretch reads MKTENLIVTT…GPVPRQQEEL (114 aa). The interval 77–107 is disordered; sequence SPNSKLDDGNMSVHMGDGLDGKKSSSKKGPV. 2 consecutive NR C4-type zinc fingers follow at residues 115-135 and 151-175; these read CLVC…CEGC and CKFG…LKKC. Positions 115–187 form a DNA-binding region, nuclear receptor; that stretch reads CLVCGDRASG…VGMRPECVVP (73 aa). Residues 278-514 enclose the NR LBD domain; that stretch reads NQVAVIYKLI…FLEEVWDVGD (237 aa).

The protein belongs to the nuclear hormone receptor family. NR1 subfamily.

The protein localises to the nucleus. In terms of biological role, receptor for ecdysone. Binds to ecdysone response elements (ECRES). The polypeptide is Ecdysone receptor (EcR) (Chironomus tentans (Midge)).